The sequence spans 322 residues: GDSL esterase/lipase At2g04020 (322 aa).

A signal peptide spans 1–26 (MGLPSSLESYLLLILLSFLNVSTIYS). The active-site Nucleophile is the Ser-50. A glycan (N-linked (GlcNAc...) asparagine) is linked at Asn-260. Catalysis depends on residues Asp-296 and His-299.

The protein belongs to the 'GDSL' lipolytic enzyme family.

The protein resides in the secreted. This Arabidopsis thaliana (Mouse-ear cress) protein is GDSL esterase/lipase At2g04020.